A 194-amino-acid chain; its full sequence is Peptidyl-tRNA hydrolase (194 aa).

Tyr16 serves as a coordination point for tRNA. His21 functions as the Proton acceptor in the catalytic mechanism. 3 residues coordinate tRNA: Phe66, Asn68, and Asn114.

Belongs to the PTH family. As to quaternary structure, monomer.

It is found in the cytoplasm. The catalysed reaction is an N-acyl-L-alpha-aminoacyl-tRNA + H2O = an N-acyl-L-amino acid + a tRNA + H(+). In terms of biological role, hydrolyzes ribosome-free peptidyl-tRNAs (with 1 or more amino acids incorporated), which drop off the ribosome during protein synthesis, or as a result of ribosome stalling. Its function is as follows. Catalyzes the release of premature peptidyl moieties from peptidyl-tRNA molecules trapped in stalled 50S ribosomal subunits, and thus maintains levels of free tRNAs and 50S ribosomes. The sequence is that of Peptidyl-tRNA hydrolase from Geobacter metallireducens (strain ATCC 53774 / DSM 7210 / GS-15).